Reading from the N-terminus, the 189-residue chain is Peptidyl-tRNA hydrolase (189 aa).

TRNA is bound at residue tyrosine 14. The active-site Proton acceptor is histidine 19. Residues tyrosine 64, asparagine 66, and asparagine 112 each coordinate tRNA.

The protein belongs to the PTH family. In terms of assembly, monomer.

The protein resides in the cytoplasm. It carries out the reaction an N-acyl-L-alpha-aminoacyl-tRNA + H2O = an N-acyl-L-amino acid + a tRNA + H(+). Hydrolyzes ribosome-free peptidyl-tRNAs (with 1 or more amino acids incorporated), which drop off the ribosome during protein synthesis, or as a result of ribosome stalling. Its function is as follows. Catalyzes the release of premature peptidyl moieties from peptidyl-tRNA molecules trapped in stalled 50S ribosomal subunits, and thus maintains levels of free tRNAs and 50S ribosomes. This Clostridium botulinum (strain Kyoto / Type A2) protein is Peptidyl-tRNA hydrolase.